The primary structure comprises 121 residues: MNAYAVIETGGEQLRVEPGRFYDVRHFASLNPENLGPNSKILIYRVLMICDESTINIGHPWLKGAMIKGRILHSRLDNKITVYRMRSKKKTRRKLGHRQKLIRFVVDSICSDVKDLYKQKD.

It belongs to the bacterial ribosomal protein bL21 family. As to quaternary structure, part of the 50S ribosomal subunit.

The protein localises to the plastid. Its subcellular location is the chloroplast. Its function is as follows. This protein binds to 23S rRNA. The polypeptide is Large ribosomal subunit protein bL21c (Huperzia lucidula (Shining clubmoss)).